A 369-amino-acid chain; its full sequence is Beta-1,4-galactosyltransferase 2 (369 aa).

At 1–15 (MSRLLGGTLERVCKA) the chain is on the cytoplasmic side. Residues 16-36 (VLLLCLLHFLVAVILYFDVYA) traverse the membrane as a helical; Signal-anchor for type II membrane protein segment. Residues 37–369 (QHLAFFSRFS…GQPMSWLTQG (333 aa)) are Lumenal-facing. The segment covering 58-73 (ASSSTNCSRPNATAAS) has biased composition (polar residues). The interval 58 to 90 (ASSSTNCSRPNATAASSGLPEVPSARPGPTAPV) is disordered. Residues Asn63 and Asn68 are each glycosylated (N-linked (GlcNAc...) asparagine). Residues Cys94 and Cys136 are joined by a disulfide bond. Residues 147–151 (PFRHR), 186–188 (FNR), 214–215 (VD), and Trp275 each bind UDP-alpha-D-galactose. Cys208 and Cys227 are oxidised to a cystine. Asp215 contacts Mn(2+). N-acetyl-D-glucosamine is bound at residue 277-280 (GEDD). His308 is a binding site for Mn(2+). A UDP-alpha-D-galactose-binding site is contributed by 308 to 310 (HDR). Arg320 contacts N-acetyl-D-glucosamine. Asn354 carries an N-linked (GlcNAc...) asparagine glycan.

The protein belongs to the glycosyltransferase 7 family. Mn(2+) is required as a cofactor.

The protein resides in the golgi apparatus. It localises to the golgi stack membrane. The catalysed reaction is D-glucose + UDP-alpha-D-galactose = lactose + UDP + H(+). It carries out the reaction an N-acetyl-beta-D-glucosaminyl derivative + UDP-alpha-D-galactose = a beta-D-galactosyl-(1-&gt;4)-N-acetyl-beta-D-glucosaminyl derivative + UDP + H(+). The enzyme catalyses N-acetyl-D-glucosamine + UDP-alpha-D-galactose = beta-D-galactosyl-(1-&gt;4)-N-acetyl-D-glucosamine + UDP + H(+). It participates in protein modification; protein glycosylation. Functionally, responsible for the synthesis of complex-type N-linked oligosaccharides in many glycoproteins as well as the carbohydrate moieties of glycolipids. Can produce lactose. The chain is Beta-1,4-galactosyltransferase 2 from Mus musculus (Mouse).